We begin with the raw amino-acid sequence, 104 residues long: Hydrogen cyanide synthase subunit HcnA (104 aa).

Residues 16–97 (ADMTIHLNGQ…GMRVETESNR (82 aa)) form the 2Fe-2S ferredoxin-type domain. Residues cysteine 60, cysteine 65, cysteine 68, and cysteine 81 each coordinate [2Fe-2S] cluster.

Heterotrimer of HcnA, HcnB and HcnC.

Its subcellular location is the cell membrane. It catalyses the reaction glycine + 2 A = hydrogen cyanide + 2 AH2 + CO2. With respect to regulation, oxygen is necessary for cyanogenesis. Activated by succinate, glycine methyl ester, glucose and D,L-methionine in addition to glycine. Phenazine methosulfate, methylene blue, 2,6-dichlorophenolindophenol (DCIP) and ferricyanide can replace oxygen for the reaction. Inhibited by pyrrolnitrin and acriflavine at 1 mM concentration. Its function is as follows. A three-component membrane-bound flavoenzyme that catalyzes the formation of hydrogen cyanide, a secondary metabolite, by transfer of electrons to a cyanide-resistant branch of the aerobic respiratory chain. This Pseudomonas aeruginosa (strain ATCC 15692 / DSM 22644 / CIP 104116 / JCM 14847 / LMG 12228 / 1C / PRS 101 / PAO1) protein is Hydrogen cyanide synthase subunit HcnA.